Consider the following 425-residue polypeptide: tRNA(Ile)-lysidine synthase (425 aa).

An ATP-binding site is contributed by Ser-27–Ser-32.

It belongs to the tRNA(Ile)-lysidine synthase family.

Its subcellular location is the cytoplasm. It catalyses the reaction cytidine(34) in tRNA(Ile2) + L-lysine + ATP = lysidine(34) in tRNA(Ile2) + AMP + diphosphate + H(+). In terms of biological role, ligates lysine onto the cytidine present at position 34 of the AUA codon-specific tRNA(Ile) that contains the anticodon CAU, in an ATP-dependent manner. Cytidine is converted to lysidine, thus changing the amino acid specificity of the tRNA from methionine to isoleucine. This chain is tRNA(Ile)-lysidine synthase, found in Streptococcus pneumoniae serotype 2 (strain D39 / NCTC 7466).